The primary structure comprises 208 residues: Uracil phosphoribosyltransferase (208 aa).

Residues R78, R103, and 130–138 (DPMLATGGS) each bind 5-phospho-alpha-D-ribose 1-diphosphate. Uracil is bound by residues I193 and 198-200 (GDA). D199 serves as a coordination point for 5-phospho-alpha-D-ribose 1-diphosphate.

This sequence belongs to the UPRTase family. The cofactor is Mg(2+).

It carries out the reaction UMP + diphosphate = 5-phospho-alpha-D-ribose 1-diphosphate + uracil. It participates in pyrimidine metabolism; UMP biosynthesis via salvage pathway; UMP from uracil: step 1/1. Allosterically activated by GTP. In terms of biological role, catalyzes the conversion of uracil and 5-phospho-alpha-D-ribose 1-diphosphate (PRPP) to UMP and diphosphate. The chain is Uracil phosphoribosyltransferase from Mannheimia succiniciproducens (strain KCTC 0769BP / MBEL55E).